The chain runs to 208 residues: Thymidylate kinase (208 aa).

An ATP-binding site is contributed by 11 to 18 (GTEGVGKT).

It belongs to the thymidylate kinase family.

The catalysed reaction is dTMP + ATP = dTDP + ADP. Phosphorylation of dTMP to form dTDP in both de novo and salvage pathways of dTTP synthesis. This is Thymidylate kinase from Psychrobacter sp. (strain PRwf-1).